A 585-amino-acid chain; its full sequence is Arginine--tRNA ligase (585 aa).

The 'HIGH' region signature appears at 127-137; it reads PNTNKPLHVGH.

The protein belongs to the class-I aminoacyl-tRNA synthetase family. In terms of assembly, monomer.

Its subcellular location is the cytoplasm. The catalysed reaction is tRNA(Arg) + L-arginine + ATP = L-arginyl-tRNA(Arg) + AMP + diphosphate. This Borrelia garinii subsp. bavariensis (strain ATCC BAA-2496 / DSM 23469 / PBi) (Borreliella bavariensis) protein is Arginine--tRNA ligase.